Reading from the N-terminus, the 429-residue chain is Putative protease Do-like 14 (429 aa).

Residues 87–113 are disordered; sequence KSEAPINDEKGVSVEASDSSSKPSNGY. The segment at 113–338 is serine protease; sequence YLGRDTIANA…IRPWIGLKMV (226 aa). Catalysis depends on charge relay system residues H165, D203, and S281. The PDZ domain occupies 318 to 424; the sequence is IIEHFKKSGR…RVTLEVIPEE (107 aa).

This sequence belongs to the peptidase S1C family.

Its function is as follows. Putative serine protease. The chain is Putative protease Do-like 14 (DEGP14) from Arabidopsis thaliana (Mouse-ear cress).